The chain runs to 885 residues: Alanine--tRNA ligase (885 aa).

Zn(2+)-binding residues include His-574, His-578, Cys-676, and His-680.

Belongs to the class-II aminoacyl-tRNA synthetase family. It depends on Zn(2+) as a cofactor.

The protein resides in the cytoplasm. It catalyses the reaction tRNA(Ala) + L-alanine + ATP = L-alanyl-tRNA(Ala) + AMP + diphosphate. Catalyzes the attachment of alanine to tRNA(Ala) in a two-step reaction: alanine is first activated by ATP to form Ala-AMP and then transferred to the acceptor end of tRNA(Ala). Also edits incorrectly charged Ser-tRNA(Ala) and Gly-tRNA(Ala) via its editing domain. The sequence is that of Alanine--tRNA ligase from Syntrophobacter fumaroxidans (strain DSM 10017 / MPOB).